A 189-amino-acid chain; its full sequence is Threonylcarbamoyl-AMP synthase (189 aa).

The YrdC-like domain maps to 9–189; it reads ASAQRKLSVY…IDGETGKRLR (181 aa).

Belongs to the SUA5 family. TsaC subfamily.

It is found in the cytoplasm. It carries out the reaction L-threonine + hydrogencarbonate + ATP = L-threonylcarbamoyladenylate + diphosphate + H2O. Functionally, required for the formation of a threonylcarbamoyl group on adenosine at position 37 (t(6)A37) in tRNAs that read codons beginning with adenine. Catalyzes the conversion of L-threonine, HCO(3)(-)/CO(2) and ATP to give threonylcarbamoyl-AMP (TC-AMP) as the acyladenylate intermediate, with the release of diphosphate. In Neisseria meningitidis serogroup C (strain 053442), this protein is Threonylcarbamoyl-AMP synthase.